Reading from the N-terminus, the 117-residue chain is MSNIIKQIEQEQMKQDVPSFRPGDNVEVKVWVVEGSKKRLQAFEGVVIAIRNRGLHSAFTVRKISNGEGVERVFQTHSPVVDSITVKRRGAVRKAKLYYLRERSGKAARIKERLNAK.

The protein belongs to the bacterial ribosomal protein bL19 family.

In terms of biological role, this protein is located at the 30S-50S ribosomal subunit interface and may play a role in the structure and function of the aminoacyl-tRNA binding site. The polypeptide is Large ribosomal subunit protein bL19 (Proteus mirabilis (strain HI4320)).